The primary structure comprises 454 residues: Tryptophanase (454 aa).

Lys-256 carries the post-translational modification N6-(pyridoxal phosphate)lysine.

The protein belongs to the beta-eliminating lyase family. In terms of assembly, homotetramer. Requires pyridoxal 5'-phosphate as cofactor.

The catalysed reaction is L-tryptophan + H2O = indole + pyruvate + NH4(+). It participates in amino-acid degradation; L-tryptophan degradation via pyruvate pathway; indole and pyruvate from L-tryptophan: step 1/1. The chain is Tryptophanase from Hyphomonas neptunium (strain ATCC 15444).